The sequence spans 1396 residues: DNA-directed RNA polymerase subunit beta' (1396 aa).

Residues C73, C75, C88, and C91 each coordinate Zn(2+). Mg(2+) contacts are provided by D467, D469, and D471. C817, C891, C898, and C901 together coordinate Zn(2+).

The protein belongs to the RNA polymerase beta' chain family. As to quaternary structure, the RNAP catalytic core consists of 2 alpha, 1 beta, 1 beta' and 1 omega subunit. When a sigma factor is associated with the core the holoenzyme is formed, which can initiate transcription. The cofactor is Mg(2+). Zn(2+) is required as a cofactor.

It carries out the reaction RNA(n) + a ribonucleoside 5'-triphosphate = RNA(n+1) + diphosphate. Functionally, DNA-dependent RNA polymerase catalyzes the transcription of DNA into RNA using the four ribonucleoside triphosphates as substrates. In Orientia tsutsugamushi (strain Ikeda) (Rickettsia tsutsugamushi), this protein is DNA-directed RNA polymerase subunit beta'.